Here is a 53-residue protein sequence, read N- to C-terminus: Zinc metalloproteinase-disintegrin-like alborhagin (53 aa).

It belongs to the venom metalloproteinase (M12B) family. P-III subfamily. P-IIIb sub-subfamily. In terms of assembly, monomer. The cofactor is Zn(2+). Post-translationally, contains numerous disulfide bonds. Glycosylated. In terms of tissue distribution, expressed by the venom gland.

The protein resides in the secreted. With respect to regulation, alborhagin-induced platelet aggregation, but not shape change, is inhibited by EDTA, suggesting that the platelet activation (shape change) is independent of divalent cation or metalloproteinase activity. Its function is as follows. Induces platelet activation and glycoprotein VI (GP6)-dependent platelet aggregation. Induces ectodomain cleavage of GP6 by activating endogenous platelet metalloproteinases (probably ADAM10). Has fibrinogenolytic activity against the alpha chain of fibrinogen (FGA). Recognizes distinct binding sites as convulxin, since alborhagin has minimal effect on convulxin binding to GPVI-expressing cells. In terms of biological role, disintegrin alborhagin-C: 42 kDa fragment of alborhagin autoproteolysed that does not show platelet activation. This is Zinc metalloproteinase-disintegrin-like alborhagin from Trimeresurus albolabris (White-lipped pit viper).